Here is a 152-residue protein sequence, read N- to C-terminus: UPF0756 membrane protein Daud_1310 (152 aa).

A run of 4 helical transmembrane segments spans residues 14-34 (LVGVLAKSHLIAAAACILLFI), 51-71 (LELGLLILLLTIMVPLANGKI), 76-96 (IIYNLTSIPGLLAILGGALAT), and 112-132 (IIFGLIIGSIFGILFLGGMPV).

The protein belongs to the UPF0756 family.

Its subcellular location is the cell membrane. This chain is UPF0756 membrane protein Daud_1310, found in Desulforudis audaxviator (strain MP104C).